A 414-amino-acid polypeptide reads, in one-letter code: Putative competence-damage inducible protein (414 aa).

It belongs to the CinA family.

This Listeria monocytogenes serovar 1/2a (strain ATCC BAA-679 / EGD-e) protein is Putative competence-damage inducible protein.